Here is a 336-residue protein sequence, read N- to C-terminus: DNA repair protein RAD51 homolog B (336 aa).

The HhH domain occupies 45–74 (TVEAVAYAPKKELLNIKGISEAKAEKILAE). Residue 124–131 (GEFRTGKT) participates in ATP binding. The Nuclear export signal signature appears at 242–257 (LARFLRMLLRLADEFG).

Belongs to the RecA family. RAD51 subfamily. Forms linear homooligomers, giving rise to a RAD51 nucleoprotein filament, which is essential for strand-pairing reactions during DNA recombination.

It is found in the nucleus. The protein resides in the cytoplasm. The protein localises to the chromosome. In terms of biological role, plays an important role in homologous strand exchange, a key step in DNA repair through homologous recombination (HR). Binds to single-stranded DNA in an ATP-dependent manner to form nucleoprotein filaments which are essential for the homology search and strand exchange. Catalyzes the recognition of homology and strand exchange between homologous DNA partners to form a joint molecule between a processed DNA break and the repair template. Recruited to resolve stalled replication forks during replication stress. Also involved in interstrand cross-link repair. The sequence is that of DNA repair protein RAD51 homolog B (rad51-b) from Xenopus laevis (African clawed frog).